The sequence spans 663 residues: Polyunsaturated fatty acid lipoxygenase ALOX12 (663 aa).

A PLAT domain is found at 2–114 (GRYRVRVVTG…ILSLPEGTAR (113 aa)). Residues 115 to 663 (LAGDNALDVF…PSRIENSITI (549 aa)) form the Lipoxygenase domain. S246 carries the post-translational modification Phosphoserine. Residues H360, H365, H540, N544, and I663 each coordinate Fe cation.

The protein belongs to the lipoxygenase family. Requires Fe cation as cofactor. In terms of tissue distribution, found primarily in platelets and in microsomal and cytosolic fractions of the epidermis (at protein level).

It is found in the cytoplasm. It localises to the cytosol. The protein resides in the membrane. It catalyses the reaction (5Z,8Z,11Z,14Z)-eicosatetraenoate + O2 = (12S)-hydroperoxy-(5Z,8Z,10E,14Z)-eicosatetraenoate. The enzyme catalyses (9Z,12Z)-octadecadienoate + O2 = (13S)-hydroperoxy-(9Z,11E)-octadecadienoate. The catalysed reaction is 2 leukotriene A4 + O2 + 2 H2O = 2 lipoxin A4. It carries out the reaction 2 leukotriene A4 + O2 + 2 H2O = 2 lipoxin B4. It catalyses the reaction (5Z,8Z,11Z)-eicosatrienoate + O2 = (12S)-hydroperoxy-(5Z,8Z,10E)-eicosatrienoate. The enzyme catalyses (8Z,11Z,14Z)-eicosatrienoate + O2 = (12S)-hydroperoxy-(8Z,10E,14Z)-eicosatrienoate. The catalysed reaction is (4Z,7Z,10Z,13Z,16Z,19Z)-docosahexaenoate + O2 = (14S)-hydroperoxy-(4Z,7Z,10Z,12E,16Z,19Z)-docosahexaenoate. It carries out the reaction (7S)-hydroperoxy-(4Z,8E,10Z,13Z,16Z,19Z)-docosahexaenoate + O2 = (7S,14S)-dihydroperoxy-(4Z,8E,10Z,12E,16Z,19Z)-docosahexaenoate. It catalyses the reaction (7S)-hydroperoxy-(4Z,8E,10Z,13Z,16Z,19Z)-docosahexaenoate + O2 = (7S,17S)-dihydroperoxy-(4Z,8E,10Z,13Z,15E,19Z)-docosahexaenoate. The enzyme catalyses (14R,15S)-epoxy-(5Z,8Z,11Z)-eicosatrienoate + O2 = (12S)-hydroperoxy-(14R,15S)-epoxy-(5Z,8Z,10E)-eicosatrienoate. The catalysed reaction is (14S,15R)-epoxy-(5Z,8Z,11Z)-eicosatrienoate + O2 = (12S)-hydroperoxy-(14S,15R)-epoxy-(5Z,8Z,10E)-eicosatrienoate. It carries out the reaction (5Z,8Z,11Z,14Z)-eicosatetraenoate + O2 = (15S)-hydroperoxy-(5Z,8Z,11Z,13E)-eicosatetraenoate. It catalyses the reaction (14S)-hydroperoxy-(4Z,7Z,10Z,12E,16Z,19Z)-docosahexaenoate = (13S,14S)-epoxy-(4Z,7Z,9E,11E,16Z,19Z)-docosahexaenoate + H2O. The enzyme catalyses N-(5Z,8Z,11Z,14Z)-eicosatetraenoyl-L-alanine + O2 = N-(15S)-hydroperoxy-(5Z,8Z,11Z,13E)-eicosatetraenoyl-alanine. The catalysed reaction is N-(5Z,8Z,11Z,14Z)-eicosatetraenoyl-L-alanine + O2 = N-(12S)-hydroperoxy-(5Z,8Z,10E,14Z)-eicosatetraenoyl-alanine. It carries out the reaction N-(5Z,8Z,11Z,14Z)-eicosatetraenoyl-gamma-aminobutanoate + O2 = N-(15S)-hydroperoxy-(5Z,8Z,11Z,13E)-eicosatetraenoyl-gamma-aminobutanoate. It catalyses the reaction N-(5Z,8Z,11Z,14Z)-eicosatetraenoyl-gamma-aminobutanoate + O2 = N-(12S)-hydroperoxy-(5Z,8Z,10E,14Z)-eicosatetraenoyl-gamma-aminobutanoate. The enzyme catalyses N-(5Z,8Z,11Z,14Z)-eicosatetraenoyl-glycine + O2 = N-(15S)-hydroperoxy-(5Z,8Z,11Z,13E)-eicosatetraenoyl-glycine. The catalysed reaction is N-(5Z,8Z,11Z,14Z)-eicosatetraenoyl-glycine + O2 = N-(12S)-hydroperoxy-(5Z,8Z,10E,14Z)-eicosatetraenoyl-glycine. It carries out the reaction N-(5Z,8Z,11Z,14Z)-eicosatetraenoyl-taurine + O2 = N-(12S)-hydroperoxy-(5Z,8Z,10E,14Z)-eicosatetraenoyl-taurine. It catalyses the reaction N-(5Z,8Z,11Z,14Z)-eicosatetraenoyl-taurine + O2 = N-(15S)-hydroperoxy-(5Z,8Z,11Z,13E)-eicosatetraenoyl-taurine. The enzyme catalyses (5Z,8Z,11Z,14Z,17Z)-eicosapentaenoate + O2 = (12S)-hydroperoxy-(5Z,8Z,10E,14Z,17Z)-eicosapentaenoate. It participates in lipid metabolism; hydroperoxy eicosatetraenoic acid biosynthesis. Its activity is regulated as follows. Activated by EGF. Arachidonic acid conversion is inhibited by (13S,14S)-epoxy-(4Z,7Z,9E,11E,16Z,19Z)-docosahexaenoate (13S,14S-epoxy-DHA). Arachidonate 12-lipoxygenase activity is decreased when PH decreases from 7.4 to 6. In terms of biological role, catalyzes the regio and stereo-specific incorporation of molecular oxygen into free and esterified polyunsaturated fatty acids generating lipid hydroperoxides that can be further reduced to the corresponding hydroxy species. Mainly converts arachidonate ((5Z,8Z,11Z,14Z)-eicosatetraenoate) to the specific bioactive lipid (12S)-hydroperoxyeicosatetraenoate/(12S)-HPETE. Through the production of bioactive lipids like (12S)-HPETE it regulates different biological processes including platelet activation. It can also catalyze the epoxidation of double bonds of polyunsaturated fatty acids such as (14S)-hydroperoxy-docosahexaenoate/(14S)-HPDHA resulting in the formation of (13S,14S)-epoxy-DHA. Furthermore, it may participate in the sequential oxidations of DHA ((4Z,7Z,10Z,13Z,16Z,19Z)-docosahexaenoate) to generate specialized pro-resolving mediators (SPMs) like resolvin D5 ((7S,17S)-diHPDHA) and (7S,14S)-diHPDHA, that actively down-regulate the immune response and have anti-aggregation properties with platelets. An additional function involves a multistep process by which it transforms leukotriene A4/LTA4 into the bioactive lipids lipoxin A4/LXA4 and lipoxin B4/LXB4, both are vasoactive and LXA4 may regulate neutrophil function via occupancy of specific recognition sites. Can also peroxidize linoleate ((9Z,12Z)-octadecadienoate) to (13S)-hydroperoxyoctadecadienoate/ (13S-HPODE). Due to its role in regulating both the expression of the vascular endothelial growth factor (VEGF, an angiogenic factor involved in the survival and metastasis of solid tumors) and the expression of integrin beta-1 (known to affect tumor cell migration and proliferation), it can be regarded as protumorigenic. Important for cell survival, as it may play a role not only in proliferation but also in the prevention of apoptosis in vascular smooth muscle cells. This is Polyunsaturated fatty acid lipoxygenase ALOX12 (Alox12) from Mus musculus (Mouse).